The primary structure comprises 479 residues: Sucrose-6-phosphate hydrolase (479 aa).

Residues 44–47 (LLND), Q63, 106–107 (YS), 166–167 (RD), and E223 each bind substrate. Residue D47 is part of the active site.

This sequence belongs to the glycosyl hydrolase 32 family.

The protein localises to the cytoplasm. The enzyme catalyses Hydrolysis of terminal non-reducing beta-D-fructofuranoside residues in beta-D-fructofuranosides.. It functions in the pathway glycan biosynthesis; sucrose metabolism. The protein is Sucrose-6-phosphate hydrolase (scrB) of Streptococcus mutans serotype c (strain ATCC 700610 / UA159).